We begin with the raw amino-acid sequence, 334 residues long: D-fructose 1,6-bisphosphatase class 2/sedoheptulose 1,7-bisphosphatase (334 aa).

4 residues coordinate Mn(2+): Asp33, Glu57, Asp85, and Glu88. Residues 88 to 90, Tyr119, 164 to 166, and 186 to 188 each bind substrate; these read EGT, RAR, and DGD. Glu213 provides a ligand contact to Mn(2+).

This sequence belongs to the FBPase class 2 family. In terms of assembly, homotetramer. Mn(2+) is required as a cofactor.

It catalyses the reaction beta-D-fructose 1,6-bisphosphate + H2O = beta-D-fructose 6-phosphate + phosphate. The catalysed reaction is D-sedoheptulose 1,7-bisphosphate + H2O = D-sedoheptulose 7-phosphate + phosphate. It participates in carbohydrate biosynthesis; Calvin cycle. Its function is as follows. Catalyzes the hydrolysis of fructose 1,6-bisphosphate (Fru 1,6-P2) and sedoheptulose 1,7-bisphosphate (Sed 1,7-P2) to fructose 6-phosphate and sedoheptulose 7-phosphate, respectively. This is D-fructose 1,6-bisphosphatase class 2/sedoheptulose 1,7-bisphosphatase from Parasynechococcus marenigrum (strain WH8102).